Consider the following 483-residue polypeptide: Aspartyl/glutamyl-tRNA(Asn/Gln) amidotransferase subunit B (483 aa).

It belongs to the GatB/GatE family. GatB subfamily. Heterotrimer of A, B and C subunits.

The enzyme catalyses L-glutamyl-tRNA(Gln) + L-glutamine + ATP + H2O = L-glutaminyl-tRNA(Gln) + L-glutamate + ADP + phosphate + H(+). It carries out the reaction L-aspartyl-tRNA(Asn) + L-glutamine + ATP + H2O = L-asparaginyl-tRNA(Asn) + L-glutamate + ADP + phosphate + 2 H(+). Its function is as follows. Allows the formation of correctly charged Asn-tRNA(Asn) or Gln-tRNA(Gln) through the transamidation of misacylated Asp-tRNA(Asn) or Glu-tRNA(Gln) in organisms which lack either or both of asparaginyl-tRNA or glutaminyl-tRNA synthetases. The reaction takes place in the presence of glutamine and ATP through an activated phospho-Asp-tRNA(Asn) or phospho-Glu-tRNA(Gln). The protein is Aspartyl/glutamyl-tRNA(Asn/Gln) amidotransferase subunit B of Lachnospira eligens (strain ATCC 27750 / DSM 3376 / VPI C15-48 / C15-B4) (Eubacterium eligens).